Consider the following 299-residue polypeptide: Putative beta-glucosidase 2 (299 aa).

A signal peptide spans 1-16 (MLHCITTIFLSISRMT). 49 to 50 (NE) lines the a beta-D-glucoside pocket. Glu50 acts as the Proton donor in catalysis. The cysteines at positions 69 and 72 are disulfide-linked. N-linked (GlcNAc...) asparagine glycans are attached at residues Asn71 and Asn76. A beta-D-glucoside is bound at residue Tyr189. Residue Asn222 is glycosylated (N-linked (GlcNAc...) asparagine). Glu255 lines the a beta-D-glucoside pocket. The active-site Nucleophile is Glu255. N-linked (GlcNAc...) asparagine glycosylation occurs at Asn290.

Belongs to the glycosyl hydrolase 1 family.

The catalysed reaction is Hydrolysis of terminal, non-reducing beta-D-glucosyl residues with release of beta-D-glucose.. This is Putative beta-glucosidase 2 from Arabidopsis thaliana (Mouse-ear cress).